Consider the following 271-residue polypeptide: Aminoglycoside 3'-phosphotransferase (271 aa).

Catalysis depends on D198, which acts as the Proton acceptor.

It belongs to the aminoglycoside phosphotransferase family.

The catalysed reaction is kanamycin A + ATP = kanamycin 3'-phosphate + ADP + H(+). Its function is as follows. Resistance to kanamycin and structurally-related aminoglycosides, including amikacin. The protein is Aminoglycoside 3'-phosphotransferase (aphA1) of Escherichia coli.